A 330-amino-acid polypeptide reads, in one-letter code: Aspartate--ammonia ligase (330 aa).

This sequence belongs to the class-II aminoacyl-tRNA synthetase family. AsnA subfamily.

It localises to the cytoplasm. The enzyme catalyses L-aspartate + NH4(+) + ATP = L-asparagine + AMP + diphosphate + H(+). The protein operates within amino-acid biosynthesis; L-asparagine biosynthesis; L-asparagine from L-aspartate (ammonia route): step 1/1. This is Aspartate--ammonia ligase from Salmonella schwarzengrund (strain CVM19633).